A 37-amino-acid chain; its full sequence is Large ribosomal subunit protein bL36 (37 aa).

The protein belongs to the bacterial ribosomal protein bL36 family.

The protein is Large ribosomal subunit protein bL36 of Aquifex aeolicus (strain VF5).